We begin with the raw amino-acid sequence, 462 residues long: Trigger factor (462 aa).

Residues G163–L248 enclose the PPIase FKBP-type domain. The interval S442 to K462 is disordered. A compositionally biased stretch (basic and acidic residues) spans A452–K462.

Belongs to the FKBP-type PPIase family. Tig subfamily.

It localises to the cytoplasm. It catalyses the reaction [protein]-peptidylproline (omega=180) = [protein]-peptidylproline (omega=0). Functionally, involved in protein export. Acts as a chaperone by maintaining the newly synthesized protein in an open conformation. Functions as a peptidyl-prolyl cis-trans isomerase. This is Trigger factor from Mycoplasmopsis synoviae (strain 53) (Mycoplasma synoviae).